A 391-amino-acid chain; its full sequence is uncharacterized protein (391 aa).

This sequence belongs to the mycobacterial PPE family.

This is an uncharacterized protein from Mycobacterium tuberculosis (strain CDC 1551 / Oshkosh).